Reading from the N-terminus, the 269-residue chain is Tryptophan synthase alpha chain (269 aa).

Active-site proton acceptor residues include Glu-56 and Asp-67.

This sequence belongs to the TrpA family. As to quaternary structure, tetramer of two alpha and two beta chains.

It catalyses the reaction (1S,2R)-1-C-(indol-3-yl)glycerol 3-phosphate + L-serine = D-glyceraldehyde 3-phosphate + L-tryptophan + H2O. It participates in amino-acid biosynthesis; L-tryptophan biosynthesis; L-tryptophan from chorismate: step 5/5. Its function is as follows. The alpha subunit is responsible for the aldol cleavage of indoleglycerol phosphate to indole and glyceraldehyde 3-phosphate. This is Tryptophan synthase alpha chain from Mycobacterium ulcerans (strain Agy99).